A 209-amino-acid polypeptide reads, in one-letter code: MIGLVGKKLGMSRIFTKEGSSIPITVIQIQENRITQIRNIKTDKYYAIQVTTGLKKLNRLKKPESGHFLKSGVIPGRGLWEFRINNNEKFQIGQSIKINIFNDIKKVDVTGISKGKGFSGTVKRWNFRTQDATHGNSLSHRVPGSIGQNQTPGRVFKGKKMAGHLGNNRVTVQNLNIVKIDQNRNLLLVKGAVPGPTGSDLIVKPAIKI.

Residue Q150 is modified to N5-methylglutamine.

Belongs to the universal ribosomal protein uL3 family. Part of the 50S ribosomal subunit. Forms a cluster with proteins L14 and L19. Methylated by PrmB.

Functionally, one of the primary rRNA binding proteins, it binds directly near the 3'-end of the 23S rRNA, where it nucleates assembly of the 50S subunit. The chain is Large ribosomal subunit protein uL3 from Buchnera aphidicola subsp. Schizaphis graminum (strain Sg).